Here is a 144-residue protein sequence, read N- to C-terminus: uncharacterized protein (144 aa).

2 helical membrane-spanning segments follow: residues 76-96 (LLSA…VTML) and 105-125 (ILRA…VKSY).

This sequence belongs to the RseC family.

Its subcellular location is the cell inner membrane. This is an uncharacterized protein from Haemophilus influenzae (strain ATCC 51907 / DSM 11121 / KW20 / Rd).